Consider the following 413-residue polypeptide: Alpha-1-antitrypsin-like protein GS55-LT (413 aa).

Positions 1–21 (MPSSISWGLLLLAGLSCLATG) are cleaved as a signal peptide. N-linked (GlcNAc...) asparagine glycans are attached at residues Asn65, Asn102, and Asn123. The RCL stretch occupies residues 368 to 387 (RHTVKGPMALTLAPEVKFNR).

Belongs to the serpin family.

The protein localises to the secreted. Inhibitor of serine proteases. In Ictidomys tridecemlineatus (Thirteen-lined ground squirrel), this protein is Alpha-1-antitrypsin-like protein GS55-LT.